The sequence spans 809 residues: Bifunctional enzyme MurC/Ddl (809 aa).

The tract at residues 1–450 (MKGTPQYHFI…GEALKDFNPK (450 aa)) is UDP-N-acetylmuramate--alanine ligase. ATP is bound by residues 111–117 (GSHGKTG) and 606–661 (IETF…SREI). The tract at residues 451–809 (KLSIGLVCGG…FTKEQDLVKR (359 aa)) is D-alanine--D-alanine ligase. Positions 573 to 784 (KRIASAVGVP…QEQIVDHFII (212 aa)) constitute an ATP-grasp domain. 3 residues coordinate Mg(2+): Asp-738, Glu-751, and Asn-753.

The protein in the N-terminal section; belongs to the MurCDEF family. It in the C-terminal section; belongs to the D-alanine--D-alanine ligase family. The cofactor is Mg(2+). Mn(2+) is required as a cofactor.

It is found in the cytoplasm. The enzyme catalyses UDP-N-acetyl-alpha-D-muramate + L-alanine + ATP = UDP-N-acetyl-alpha-D-muramoyl-L-alanine + ADP + phosphate + H(+). It carries out the reaction 2 D-alanine + ATP = D-alanyl-D-alanine + ADP + phosphate + H(+). It functions in the pathway cell wall biogenesis; peptidoglycan biosynthesis. In terms of biological role, cell wall formation. This chain is Bifunctional enzyme MurC/Ddl (murC/ddl), found in Chlamydia pneumoniae (Chlamydophila pneumoniae).